Reading from the N-terminus, the 1107-residue chain is Unconventional myosin-Ie (1107 aa).

The Myosin motor domain maps to 19 to 692 (SGVDDMVLLS…SLFLLEEMRE (674 aa)). 112-119 (GESGAGKT) contacts ATP. The interval 581 to 591 (PHYIRCIKPNE) is actin-binding. The IQ domain occupies 695–724 (YDGYARVIQKTWRKFVARKKYVQMREEASD). The TH1 domain occupies 730 to 922 (KERRRNSINR…NKVLQVSIGP (193 aa)). A disordered region spans residues 919–1052 (SIGPGLPKNS…KPQPKPKPQV (134 aa)). Polar residues-rich tracts occupy residues 979–989 (NQRSNQKSLYT) and 998–1012 (RQQSTGSDRLSQTPE). At S1001 the chain carries Phosphoserine. Positions 1034–1051 (RPPPAGGRPKPQPKPKPQ) are enriched in pro residues. An SH3 domain is found at 1050 to 1107 (PQVPQCKALYAYDAQDTDELSFNANDIIDIIKEDPSGWWTGRLRGKQGLFPNNYVTKI).

It belongs to the TRAFAC class myosin-kinesin ATPase superfamily. Myosin family. In terms of assembly, interacts with CALM and F-actin. Interacts (via SH3 domain) with SYNJ1, DNM1 and DNM2. Interacts with ARL14EP. Interacts with CARMIL1. Detected in kidney glomeruli (at protein level). Detected in utricle.

It localises to the cytoplasm. The protein resides in the cell junction. It is found in the cytoplasmic vesicle. The protein localises to the clathrin-coated vesicle. Its subcellular location is the cytoskeleton. Myosins are actin-based motor molecules with ATPase activity. Unconventional myosins serve in intracellular movements. Their highly divergent tails bind to membranous compartments, which are then moved relative to actin filaments. Binds to membranes containing anionic phospholipids via its tail domain. Involved in clathrin-mediated endocytosis and intracellular movement of clathrin-coated vesicles. Required for normal morphology of the glomerular basement membrane, normal development of foot processes by kidney podocytes and normal kidney function. In dendritic cells, may control the movement of class II-containing cytoplasmic vesicles along the actin cytoskeleton by connecting them with the actin network via ARL14EP and ARL14. The chain is Unconventional myosin-Ie (Myo1e) from Mus musculus (Mouse).